A 59-amino-acid chain; its full sequence is Conotoxin Bu1.2 (59 aa).

The signal sequence occupies residues 1 to 16; it reads MFTVFLLVVLATTVVS. Positions 17-42 are excised as a propeptide; the sequence is FSTDDESDGSNEEPSADQAARSAMNR. The segment at 18–43 is disordered; it reads STDDESDGSNEEPSADQAARSAMNRP. Residues 19–31 show a composition bias toward acidic residues; sequence TDDESDGSNEEPS. 2 disulfides stabilise this stretch: Cys-46–Cys-52 and Cys-47–Cys-57. Gly-58 is subject to Glycine amide.

It belongs to the conotoxin A superfamily. Expressed by the venom duct.

The protein localises to the secreted. The protein is Conotoxin Bu1.2 of Conus bullatus (Bubble cone).